A 327-amino-acid chain; its full sequence is MSQRQLAYVFDLNKCIGCHTCTMACKQLWTNRDGREYMYWNNVESRPGKGYPKNWEQKGGGFDKDGKLKTNGIIPIRADYGGTWNYNLLETLVEGKSNQVVPDEKPTWGPNWDEDEGKGEFPNNHYFYLPRICNHCSNPACLAACPTKAIYKREEDGLVVVDQSRCKGYRYCVKACPYGKMYFNLQKGTSEKCIGCYPRVEKGEAPACVKQCSGRIRFWGYRDDKDGPIYKLVDQWKVALPLHAEYGTEPNVFYVPPMNTTPPPFEEDGRLGDKPRIPIEDLEALFGPGVKQALATLGGEMAKRRKAQASELTDILIGYTNKDRYGI.

3 4Fe-4S ferredoxin-type domains span residues 6 to 35 (LAYVFDLNKCIGCHTCTMACKQLWTNRDGR), 124 to 155 (NHYFYLPRICNHCSNPACLAACPTKAIYKREE), and 157 to 186 (GLVVVDQSRCKGYRYCVKACPYGKMYFNLQ). [4Fe-4S] cluster contacts are provided by Cys-15, Cys-18, Cys-21, Cys-25, Cys-133, Cys-136, and Cys-141. [3Fe-4S] cluster contacts are provided by Cys-145, Cys-166, and Cys-172. Residues Cys-176, Cys-193, Cys-196, Cys-208, and Cys-212 each coordinate [4Fe-4S] cluster.

Heterotrimer of alpha (SerA), beta (SerB) and gamma (SerC) subunits. [3Fe-4S] cluster serves as cofactor. [4Fe-4S] cluster is required as a cofactor.

Its subcellular location is the periplasm. The enzyme catalyses selenite + 2 Fe(III)-[cytochrome c] + H2O = 2 Fe(II)-[cytochrome] + selenate + 2 H(+). Enzyme isolated from cells grown in a tungstate rich environment shows a 20-fold reduction in selenate reductase activity. Functionally, component of the selenate reductase, which catalyzes the reduction of selenate to selenite and allows anaerobic growth with selenate as the sole terminal electron acceptor. A c-type di-heme cytochrome of the cytc4 family was shown to donate electrons to the selenate reductase in vitro. SerABC can also use reduced benzyl viologen or reduced methyl viologen as an electron donor. This subunit transfers electrons from SerC to SerA. The reductase is specific for selenate, and cannot reduce nitrate, nitrite, chlorate or sulfate. This Thauera selenatis protein is Selenate reductase subunit beta.